We begin with the raw amino-acid sequence, 226 residues long: Peptidyl-prolyl cis-trans isomerase CYP23 (226 aa).

Positions 1–22 are cleaved as a signal peptide; sequence MGITRNLILGLACLAFVSIAKA. The 158-residue stretch at 34–191 folds into the PPIase cyclophilin-type domain; the sequence is VVFQTSYGDI…ERITILSTYY (158 aa).

This sequence belongs to the cyclophilin-type PPIase family. Ubiquitous. Lower expression in roots.

It is found in the endoplasmic reticulum. It carries out the reaction [protein]-peptidylproline (omega=180) = [protein]-peptidylproline (omega=0). In terms of biological role, PPIases accelerate the folding of proteins. It catalyzes the cis-trans isomerization of proline imidic peptide bonds in oligopeptides. This is Peptidyl-prolyl cis-trans isomerase CYP23 (CYP23) from Arabidopsis thaliana (Mouse-ear cress).